The sequence spans 232 residues: Large ribosomal subunit protein uL1 (232 aa).

Belongs to the universal ribosomal protein uL1 family. In terms of assembly, part of the 50S ribosomal subunit.

Its function is as follows. Binds directly to 23S rRNA. The L1 stalk is quite mobile in the ribosome, and is involved in E site tRNA release. In terms of biological role, protein L1 is also a translational repressor protein, it controls the translation of the L11 operon by binding to its mRNA. The chain is Large ribosomal subunit protein uL1 from Lysinibacillus sphaericus (strain C3-41).